Reading from the N-terminus, the 372-residue chain is MSRRRFDCRSVSGLLTTTPQTPIKTENFNNFYTLTPKELGRGKFAVVRQCISKSTGQEYAAKSLKKRRRGQDCRAEILHEIAVLELARSCPHVINLHEVYENATEIILVLEYAAGGEIFNLCLPELAEMVSENDVIRLIKQILEGVHYLHQNNIVHLDLKPQNILLSSIYPLGDIKIVDFGMSRKIGNASELREIMGTPEYLAPEILNYDPITTATDMWNIGIIAYMLLTHTSPFVGEDNQETYLNISQVNVDYSEEMFSSVSQLATDFIQSLLVKNPEKRPTAESCLSHSWLQQWDFGSLFHPEETSGSSQIQDLTLRSSEEKTSKSSCNGSCGAREDKENIPEDGSLVSKRFRFDDSLPSPHELVPDLFC.

Residues Thr-33 to Leu-293 enclose the Protein kinase domain. Residues Leu-39–Val-47 and Lys-62 each bind ATP. Asp-158 (proton acceptor) is an active-site residue. Positions Glu-305–Ser-348 are disordered. The segment covering Thr-307–Arg-319 has biased composition (polar residues).

The protein belongs to the protein kinase superfamily. CAMK Ser/Thr protein kinase family. DAP kinase subfamily. In terms of assembly, interacts with CHP1; the interaction induces CHP1 to translocate from the Golgi to the nucleus. In terms of processing, autophosphorylated.

It localises to the nucleus. It is found in the cell membrane. The protein localises to the endoplasmic reticulum-Golgi intermediate compartment. The catalysed reaction is L-seryl-[protein] + ATP = O-phospho-L-seryl-[protein] + ADP + H(+). The enzyme catalyses L-threonyl-[protein] + ATP = O-phospho-L-threonyl-[protein] + ADP + H(+). Its function is as follows. Acts as a positive regulator of apoptosis. Phosphorylates myosin light chains. In Mus musculus (Mouse), this protein is Serine/threonine-protein kinase 17B (Stk17b).